A 605-amino-acid chain; its full sequence is ATP-dependent RNA helicase DBP3 (605 aa).

Residues 1–124 form a disordered region; the sequence is MSAEELVASP…TPALSKKQQK (124 aa). The span at 54–66 shows a compositional bias: basic residues; it reads KDKKDKKEKKDKK. Over residues 104-114 the composition is skewed to polar residues; that stretch reads PVSTATPTESE. A Q motif motif is present at residues 175–201; the sequence is LSIRDLPINSKLQPFLNKFEKPTPIQA. The Helicase ATP-binding domain maps to 204-391; it reads WPALLSKKDV…STFLNNPLRI (188 aa). Position 217-224 (217-224) interacts with ATP; that stretch reads AETGSGKT. A DEAD box motif is present at residues 336–339; the sequence is DEAD. The Helicase C-terminal domain maps to 424 to 575; that stretch reads HLKAHLKVHP…EIPKEMDRFP (152 aa).

Belongs to the DEAD box helicase family. DDX5/DBP2 subfamily.

It localises to the nucleus. The protein resides in the nucleolus. The enzyme catalyses ATP + H2O = ADP + phosphate + H(+). Functionally, ATP-dependent RNA helicase required for 60S ribosomal subunit synthesis. Involved in efficient pre-rRNA processing, predominantly at site A3, which is necessary for the normal formation of 25S and 5.8S rRNAs. In Cryptococcus neoformans var. neoformans serotype D (strain JEC21 / ATCC MYA-565) (Filobasidiella neoformans), this protein is ATP-dependent RNA helicase DBP3 (DBP3).